A 258-amino-acid polypeptide reads, in one-letter code: MDVFVDGELESLLGMFNFDQCSSSKEERPRDELLGLSSLYNGHLHQHQHHNNVLSSDHHAFLLPDMFPFGAMPGGNLPAMLDSWDQSHHLQETSSLKRKLLDVENLCKTNSNCDVTRQELAKSKKKQRVSSESNTVDESNTNWVDGQSLSNSSDDEKASVTSVKGKTRATKGTATDPQSLYARKRREKINERLKTLQNLVPNGTKVDISTMLEEAVHYVKFLQLQIKLLSSDDLWMYAPLAYNGLDMGFHHNLLSRLM.

Positions 98 to 105 (RKLLDVEN) match the D-box motif. Residues 119 to 178 (ELAKSKKKQRVSSESNTVDESNTNWVDGQSLSNSSDDEKASVTSVKGKTRATKGTATDPQ) are disordered. The segment covering 130–152 (SSESNTVDESNTNWVDGQSLSNS) has biased composition (polar residues). Positions 173 to 186 (TATDPQSLYARKRR) are basic motif. A bHLH domain is found at 173 to 222 (TATDPQSLYARKRREKINERLKTLQNLVPNGTKVDISTMLEEAVHYVKFL). The segment at 187–222 (EKINERLKTLQNLVPNGTKVDISTMLEEAVHYVKFL) is helix-loop-helix motif.

In terms of assembly, homodimer. Ubiquitinated. Ubiquitination leads to its subsequent degradation by the 26S proteasome. Expressed constitutively in roots, leaves, and flowers. Expressed in root epidermal hair cells.

The protein localises to the nucleus. Its function is as follows. Transcription factor involved in the regulation of root hair elongation. Is sufficient to promote postmitotic cell growth in root-hair cells and is a direct transcriptional target of RHD6 and RSL1. Involved in the regulation of root hair elongation in response to low phosphate. Controls root hair cell growth by regulating the expression of genes encoding proteins involved in cell signaling, cell wall modification and secretion. This is Transcription factor RSL3 from Arabidopsis thaliana (Mouse-ear cress).